A 405-amino-acid polypeptide reads, in one-letter code: Chorismate synthase (405 aa).

Positions 43 and 49 each coordinate NADP(+). Residues 138–140 (RAS) and 259–260 (QA) contribute to the FMN site. Over residues 275 to 286 (RRGSQAHDEMRP) the composition is skewed to basic and acidic residues. A disordered region spans residues 275–308 (RRGSQAHDEMRPGPDGVLRSTNRAGGLEGGMTNG). Residues Gly-303, 318-322 (KPIST), and Arg-344 each bind FMN.

Belongs to the chorismate synthase family. Homotetramer. It depends on FMNH2 as a cofactor.

It catalyses the reaction 5-O-(1-carboxyvinyl)-3-phosphoshikimate = chorismate + phosphate. The protein operates within metabolic intermediate biosynthesis; chorismate biosynthesis; chorismate from D-erythrose 4-phosphate and phosphoenolpyruvate: step 7/7. Functionally, catalyzes the anti-1,4-elimination of the C-3 phosphate and the C-6 proR hydrogen from 5-enolpyruvylshikimate-3-phosphate (EPSP) to yield chorismate, which is the branch point compound that serves as the starting substrate for the three terminal pathways of aromatic amino acid biosynthesis. This reaction introduces a second double bond into the aromatic ring system. The protein is Chorismate synthase of Nocardia farcinica (strain IFM 10152).